Consider the following 624-residue polypeptide: MKKNRFTYGLALGALGVVFGDIGTSPLYALKVTLSGIPINQFNILGVLSLIFWSLIIVVSFKYLMIIFRADNNGEGGILALLALMKHKSTKYQPLFYIVAIFGAGLLLGDGMLTPAISVVSAVEGLGTLSDKLYPYVLPIASLILILLFSLQATGTGRIGYLFGPLILVWFITIAILGILQIAEHPVVLKAINPYYAIAFLVDEGLQGYLLLGGIFLVVTGGEALFADIGHFGKNPIRFSWFFAALPCLLLNYFGQGANLIVRPEAISNPFFMIAPSWFYLPLIIIATVATVIASQAVITATFSLTKQAVLLGLCPKIPIVQTSMLHSGQIYVPQINFILFIGTMAFCLAFKTSDNLAHAYGIAVNLEMLLVDAMVAYAAISIWRWSIFNVMFLFGLFLLIDLAFLGANTHKFITGGWVPIVLAFFIAFIMYSWRYGLEYLRDNFYMNKEDISKILKQLQYKSLNQLPGVSAIFITDVYDKSGGSFLHFLKLSRSVPENVLIVNYIVDNIPYVHYSQRYEIVCLDEKVCKLVIHYGFMETINIPRSLEKACNKNILPFKFNVDTATFMVEIPNIMASKEKRSLSFYWQEKLFAFLMRNYSANLNIEFYKLPYNRTIAIGTYCIL.

Transmembrane regions (helical) follow at residues 10-30 (LALG…LYAL), 48-68 (LSLI…MIIF), 94-114 (PLFY…GMLT), 133-153 (LYPY…SLQA), 159-179 (IGYL…ILGI), 210-230 (LLLG…ADIG), 242-262 (FFAA…NLIV), 270-290 (PFFM…ATVA), 331-351 (IYVP…CLAF), 363-383 (IAVN…AISI), 388-408 (IFNV…FLGA), and 413-433 (FITG…IMYS).

The protein belongs to the HAK/KUP transporter (TC 2.A.72) family.

The protein localises to the cell inner membrane. The enzyme catalyses K(+)(in) + H(+)(in) = K(+)(out) + H(+)(out). In terms of biological role, transport of potassium into the cell. Likely operates as a K(+):H(+) symporter. The protein is Probable potassium transport system protein Kup 1 of Legionella pneumophila (strain Lens).